The following is a 551-amino-acid chain: Glucans biosynthesis protein D (551 aa).

A signal peptide (tat-type signal) is located at residues 1-32 (MNRRRFIKGSMAMAAVCGSSGIASLFSQAAFA).

The protein belongs to the OpgD/OpgG family. Post-translationally, predicted to be exported by the Tat system. The position of the signal peptide cleavage has not been experimentally proven.

It localises to the periplasm. It functions in the pathway glycan metabolism; osmoregulated periplasmic glucan (OPG) biosynthesis. Functionally, probably involved in the control of the structural glucose backbone of osmoregulated periplasmic glucans (OPGs). This is Glucans biosynthesis protein D from Salmonella paratyphi A (strain ATCC 9150 / SARB42).